A 202-amino-acid polypeptide reads, in one-letter code: LexA repressor (202 aa).

The H-T-H motif DNA-binding region spans 28 to 48 (RAEIAQRLGFRSPNAAEEHLK). Residues S119 and K156 each act as for autocatalytic cleavage activity in the active site.

This sequence belongs to the peptidase S24 family. Homodimer.

The catalysed reaction is Hydrolysis of Ala-|-Gly bond in repressor LexA.. Represses a number of genes involved in the response to DNA damage (SOS response), including recA and lexA. Binds to the 16 bp palindromic sequence 5'-CTGTATATATATACAG-3'. In the presence of single-stranded DNA, RecA interacts with LexA causing an autocatalytic cleavage which disrupts the DNA-binding part of LexA, leading to derepression of the SOS regulon and eventually DNA repair. The protein is LexA repressor of Citrobacter koseri (strain ATCC BAA-895 / CDC 4225-83 / SGSC4696).